We begin with the raw amino-acid sequence, 334 residues long: Glycerol-3-phosphate dehydrogenase [NAD(P)+] (334 aa).

Residues S10, W11, H31, R32, and K105 each contribute to the NADPH site. Sn-glycerol 3-phosphate contacts are provided by K105, G136, and S138. A140 is a binding site for NADPH. Sn-glycerol 3-phosphate contacts are provided by K191, D244, S254, R255, and N256. Residue K191 is the Proton acceptor of the active site. R255 lines the NADPH pocket. The NADPH site is built by V279 and E281.

Belongs to the NAD-dependent glycerol-3-phosphate dehydrogenase family.

The protein localises to the cytoplasm. The enzyme catalyses sn-glycerol 3-phosphate + NAD(+) = dihydroxyacetone phosphate + NADH + H(+). It carries out the reaction sn-glycerol 3-phosphate + NADP(+) = dihydroxyacetone phosphate + NADPH + H(+). The protein operates within membrane lipid metabolism; glycerophospholipid metabolism. Catalyzes the reduction of the glycolytic intermediate dihydroxyacetone phosphate (DHAP) to sn-glycerol 3-phosphate (G3P), the key precursor for phospholipid synthesis. This Chlorobium phaeobacteroides (strain BS1) protein is Glycerol-3-phosphate dehydrogenase [NAD(P)+].